The chain runs to 917 residues: Chitin synthase 1 (917 aa).

A compositionally biased stretch (basic and acidic residues) spans 1–11; the sequence is MAYHGRGDGYD. The disordered stretch occupies residues 1–56; it reads MAYHGRGDGYDGHQLQDLPGGHNQGDQHDDAQAPFLSENPMPYDNDRLGTDTPPVR. At 1–570 the chain is on the extracellular side; sequence MAYHGRGDGY…YKSGHNIVRM (570 aa). Asn544 carries an N-linked (GlcNAc...) asparagine glycan. The chain crosses the membrane as a helical span at residues 571–591; the sequence is FFFHVQLIYNIANVIFTWFSL. Over 592–629 the chain is Cytoplasmic; the sequence is ASYWLTTTVIMDLVGTPVTASSSSAEHHGWPFGDTVTP. Residues 630 to 650 traverse the membrane as a helical segment; it reads FFNAVLKYIYLAFVILQFILA. The Extracellular portion of the chain corresponds to 651 to 664; sequence LGNRPKGSKWTYIT. The chain crosses the membrane as a helical span at residues 665–685; the sequence is SFFVFSLIQSYILVLSGYLVA. The Cytoplasmic portion of the chain corresponds to 686–716; that stretch reads RAFSVPLDQQLQLDNAKDAMASLFGGSGSAG. The helical transmembrane segment at 717-737 threads the bilayer; sequence VILVALVTIYGLYFLASFMYL. At 738 to 744 the chain is on the extracellular side; the sequence is DPWHMFH. The helical transmembrane segment at 745 to 765 threads the bilayer; the sequence is SFPYYMLLMSTYINILMIYAF. The Cytoplasmic segment spans residues 766-843; it reads NNWHDVSWGT…DLEDSYKSFR (78 aa). A helical transmembrane segment spans residues 844–864; the sequence is TMLVVSWLFSNCLLAVVITSD. Residues 865–884 lie on the Extracellular side of the membrane; that stretch reads NFNTFGIGQTASARTAWFFK. Residues 885–905 form a helical membrane-spanning segment; the sequence is FLLFATGALSVIRFIGFCWFL. Topologically, residues 906–917 are cytoplasmic; the sequence is GRTGIMCCFARR.

This sequence belongs to the chitin synthase family. Class III subfamily.

It localises to the cell membrane. The catalysed reaction is [(1-&gt;4)-N-acetyl-beta-D-glucosaminyl](n) + UDP-N-acetyl-alpha-D-glucosamine = [(1-&gt;4)-N-acetyl-beta-D-glucosaminyl](n+1) + UDP + H(+). Functionally, polymerizes chitin, a structural polymer of the cell wall and septum, by transferring the sugar moiety of UDP-GlcNAc to the non-reducing end of the growing chitin polymer. The polypeptide is Chitin synthase 1 (chs-1) (Neurospora crassa (strain ATCC 24698 / 74-OR23-1A / CBS 708.71 / DSM 1257 / FGSC 987)).